A 326-amino-acid polypeptide reads, in one-letter code: Phospho-N-acetylmuramoyl-pentapeptide-transferase (326 aa).

10 helical membrane-spanning segments follow: residues Ile-2–Phe-22, Val-51–Ala-71, Leu-73–Ile-93, Ile-113–Glu-133, Gly-143–Ser-163, Gly-175–Thr-195, Met-199–Asn-219, Ile-225–Leu-245, Met-250–Ile-270, and Val-305–Leu-325.

The protein belongs to the glycosyltransferase 4 family. MraY subfamily. It depends on Mg(2+) as a cofactor.

It is found in the cell membrane. The catalysed reaction is UDP-N-acetyl-alpha-D-muramoyl-L-alanyl-gamma-D-glutamyl-meso-2,6-diaminopimeloyl-D-alanyl-D-alanine + di-trans,octa-cis-undecaprenyl phosphate = di-trans,octa-cis-undecaprenyl diphospho-N-acetyl-alpha-D-muramoyl-L-alanyl-D-glutamyl-meso-2,6-diaminopimeloyl-D-alanyl-D-alanine + UMP. The protein operates within cell wall biogenesis; peptidoglycan biosynthesis. Catalyzes the initial step of the lipid cycle reactions in the biosynthesis of the cell wall peptidoglycan: transfers peptidoglycan precursor phospho-MurNAc-pentapeptide from UDP-MurNAc-pentapeptide onto the lipid carrier undecaprenyl phosphate, yielding undecaprenyl-pyrophosphoryl-MurNAc-pentapeptide, known as lipid I. The polypeptide is Phospho-N-acetylmuramoyl-pentapeptide-transferase (Wolbachia pipientis wMel).